Reading from the N-terminus, the 344-residue chain is 17-beta-hydroxysteroid dehydrogenase type 1 (344 aa).

3–32 (PTVVLITGCSSGIGMHLAVRLASDRSQSFK) contributes to the NAD(+) binding site. NADP(+) contacts are provided by residues 10–38 (GCSS…ATLR) and D66. Residue S135 is modified to Phosphoserine. Substrate is bound at residue S143. Y156 serves as the catalytic Proton acceptor. K160 contacts NADP(+).

Belongs to the short-chain dehydrogenases/reductases (SDR) family. As to quaternary structure, homodimer. Exists predominantly as a homodimer but also exits as monomer.

It is found in the cytoplasm. The catalysed reaction is 17beta-estradiol + NAD(+) = estrone + NADH + H(+). It carries out the reaction 17beta-estradiol + NADP(+) = estrone + NADPH + H(+). The enzyme catalyses testosterone + NADP(+) = androst-4-ene-3,17-dione + NADPH + H(+). The protein operates within steroid biosynthesis; estrogen biosynthesis. Favors the reduction of estrogens and androgens. Converts estrone (E1) to a more potent estrogen, 17beta-estradiol (E2). Also has 20-alpha-HSD activity. Uses preferentially NADH. The chain is 17-beta-hydroxysteroid dehydrogenase type 1 from Mus musculus (Mouse).